Reading from the N-terminus, the 255-residue chain is uncharacterized protein (255 aa).

Belongs to the methyltransferase superfamily.

This is an uncharacterized protein from Mycobacterium ulcerans (strain Agy99).